Here is a 240-residue protein sequence, read N- to C-terminus: UDP-2,3-diacylglucosamine hydrolase (240 aa).

5 residues coordinate Mn(2+): Asp8, His10, Asp41, Asn79, and His114. Asn79–Arg80 lines the substrate pocket. Residues Asp122, Ser160, Asn164, Lys167, and His195 each coordinate substrate. Residues His195 and His197 each coordinate Mn(2+).

It belongs to the LpxH family. Requires Mn(2+) as cofactor.

Its subcellular location is the cell inner membrane. The enzyme catalyses UDP-2-N,3-O-bis[(3R)-3-hydroxytetradecanoyl]-alpha-D-glucosamine + H2O = 2-N,3-O-bis[(3R)-3-hydroxytetradecanoyl]-alpha-D-glucosaminyl 1-phosphate + UMP + 2 H(+). It functions in the pathway glycolipid biosynthesis; lipid IV(A) biosynthesis; lipid IV(A) from (3R)-3-hydroxytetradecanoyl-[acyl-carrier-protein] and UDP-N-acetyl-alpha-D-glucosamine: step 4/6. In terms of biological role, hydrolyzes the pyrophosphate bond of UDP-2,3-diacylglucosamine to yield 2,3-diacylglucosamine 1-phosphate (lipid X) and UMP by catalyzing the attack of water at the alpha-P atom. Involved in the biosynthesis of lipid A, a phosphorylated glycolipid that anchors the lipopolysaccharide to the outer membrane of the cell. The sequence is that of UDP-2,3-diacylglucosamine hydrolase from Pectobacterium carotovorum subsp. carotovorum (strain PC1).